The chain runs to 369 residues: Methionine aminopeptidase 1B, chloroplastic (369 aa).

The transit peptide at M1 to A61 directs the protein to the chloroplast. Position 199 (H199) interacts with substrate. Residues D216, D227, and H290 each contribute to the a divalent metal cation site. Substrate is bound at residue H297. E322 and E353 together coordinate a divalent metal cation.

It belongs to the peptidase M24A family. Methionine aminopeptidase type 1 subfamily. It depends on Co(2+) as a cofactor. The cofactor is Zn(2+). Mn(2+) serves as cofactor. Fe(2+) is required as a cofactor. As to expression, ubiquitous. Preferentially expressed in green tissues.

The protein localises to the plastid. It localises to the chloroplast. It catalyses the reaction Release of N-terminal amino acids, preferentially methionine, from peptides and arylamides.. Removes the N-terminal methionine from nascent proteins. The N-terminal methionine is often cleaved when the second residue in the primary sequence is small and uncharged (Met-Ala-, Cys, Gly, Pro, Ser, Thr, or Val). This chain is Methionine aminopeptidase 1B, chloroplastic (MAP1B), found in Arabidopsis thaliana (Mouse-ear cress).